The sequence spans 500 residues: Aspartyl/glutamyl-tRNA(Asn/Gln) amidotransferase subunit B (500 aa).

The protein belongs to the GatB/GatE family. GatB subfamily. Heterotrimer of A, B and C subunits.

The enzyme catalyses L-glutamyl-tRNA(Gln) + L-glutamine + ATP + H2O = L-glutaminyl-tRNA(Gln) + L-glutamate + ADP + phosphate + H(+). It carries out the reaction L-aspartyl-tRNA(Asn) + L-glutamine + ATP + H2O = L-asparaginyl-tRNA(Asn) + L-glutamate + ADP + phosphate + 2 H(+). In terms of biological role, allows the formation of correctly charged Asn-tRNA(Asn) or Gln-tRNA(Gln) through the transamidation of misacylated Asp-tRNA(Asn) or Glu-tRNA(Gln) in organisms which lack either or both of asparaginyl-tRNA or glutaminyl-tRNA synthetases. The reaction takes place in the presence of glutamine and ATP through an activated phospho-Asp-tRNA(Asn) or phospho-Glu-tRNA(Gln). The sequence is that of Aspartyl/glutamyl-tRNA(Asn/Gln) amidotransferase subunit B from Clavibacter sepedonicus (Clavibacter michiganensis subsp. sepedonicus).